We begin with the raw amino-acid sequence, 332 residues long: 2,3-diketo-L-gulonate reductase (332 aa).

Catalysis depends on His-44, which acts as the Proton donor. NAD(+)-binding positions include 168-174 (ITMVDMS), 224-225 (WK), and 304-306 (GHE).

The protein belongs to the LDH2/MDH2 oxidoreductase family. DlgD subfamily. In terms of assembly, homodimer.

It localises to the cytoplasm. The enzyme catalyses 3-dehydro-L-gulonate + NAD(+) = 2,3-dioxo-L-gulonate + NADH + H(+). It catalyses the reaction 3-dehydro-L-gulonate + NADP(+) = 2,3-dioxo-L-gulonate + NADPH + H(+). Functionally, catalyzes the reduction of 2,3-diketo-L-gulonate in the presence of NADH, to form 3-keto-L-gulonate. This is 2,3-diketo-L-gulonate reductase from Salmonella typhi.